A 255-amino-acid polypeptide reads, in one-letter code: 3-deoxy-manno-octulosonate cytidylyltransferase (255 aa).

The protein belongs to the KdsB family.

The protein localises to the cytoplasm. The catalysed reaction is 3-deoxy-alpha-D-manno-oct-2-ulosonate + CTP = CMP-3-deoxy-beta-D-manno-octulosonate + diphosphate. Its pathway is nucleotide-sugar biosynthesis; CMP-3-deoxy-D-manno-octulosonate biosynthesis; CMP-3-deoxy-D-manno-octulosonate from 3-deoxy-D-manno-octulosonate and CTP: step 1/1. The protein operates within bacterial outer membrane biogenesis; lipopolysaccharide biosynthesis. Its function is as follows. Activates KDO (a required 8-carbon sugar) for incorporation into bacterial lipopolysaccharide in Gram-negative bacteria. This Cellvibrio japonicus (strain Ueda107) (Pseudomonas fluorescens subsp. cellulosa) protein is 3-deoxy-manno-octulosonate cytidylyltransferase.